Reading from the N-terminus, the 320-residue chain is Pyrroline-5-carboxylate reductase 2 (320 aa).

Serine 2 is modified (N-acetylserine). NADP(+)-binding positions include 6–11 and serine 34; that span reads IGAGQL. Positions 8, 10, 11, 34, 36, 56, 70, 71, and 97 each coordinate NADPH. NADP(+) is bound by residues asparagine 56, 69 to 72, and 95 to 97; these read AVKP and CAA. Residue glutamate 164 participates in L-proline binding. Asparagine 230 contacts NADPH. Positions 237 and 238 each coordinate L-proline. Over residues 295–305 the composition is skewed to low complexity; the sequence is PTVSTLTPSSP. The tract at residues 295 to 320 is disordered; sequence PTVSTLTPSSPGKLLTRSLALGGKKD. Serine 304 is modified (phosphoserine).

Belongs to the pyrroline-5-carboxylate reductase family. In terms of assembly, homodecamer; composed of 5 homodimers. Interacts with LTO1.

The protein resides in the cytoplasm. It is found in the mitochondrion. It catalyses the reaction L-proline + NADP(+) = (S)-1-pyrroline-5-carboxylate + NADPH + 2 H(+). The enzyme catalyses L-proline + NAD(+) = (S)-1-pyrroline-5-carboxylate + NADH + 2 H(+). It functions in the pathway amino-acid biosynthesis; L-proline biosynthesis; L-proline from L-glutamate 5-semialdehyde: step 1/1. Functionally, oxidoreductase that catalyzes the last step in proline biosynthesis, which corresponds to the reduction of pyrroline-5-carboxylate to L-proline using NAD(P)H. At physiologic concentrations, has higher specific activity in the presence of NADH. Involved in cellular response to oxidative stress. In some cell types, such as erythrocytes, its primary function may be the generation of NADP(+). The protein is Pyrroline-5-carboxylate reductase 2 (PYCR2) of Macaca fascicularis (Crab-eating macaque).